The primary structure comprises 591 residues: Maintenance of mitochondrial morphology protein 1 (591 aa).

Residues 1 to 83 are Lumenal-facing; that stretch reads MGFNIPWNGT…AQPSLSFTQG (83 aa). A helical membrane pass occupies residues 84 to 104; sequence LLVGQLSVVLLIGAFIKFFIF. The Cytoplasmic portion of the chain corresponds to 105-591; that stretch reads GEAPPPPSRS…GSMPDSVAVT (487 aa). Disordered stretches follow at residues 138–159, 170–189, 334–398, and 479–591; these read PRTLREKPSTSNILRPVPSSST, YSATPTNPTSKHGRSRVHHS, PGTS…KHAH, and EAEA…VAVT. 2 stretches are compositionally biased toward polar residues: residues 146 to 159 and 170 to 179; these read STSNILRPVPSSST and YSATPTNPTS. The segment covering 180 to 189 has biased composition (basic residues); the sequence is KHGRSRVHHS. The region spanning 192–462 is the SMP-LTD domain; it reads QPESLDWFNV…EPRVQVVGLP (271 aa). Positions 336 to 371 are enriched in polar residues; the sequence is TSDQTMGPSASPPNQSTSTETASINDQTSEGQSTQR. A compositionally biased stretch (low complexity) spans 379–389; the sequence is PTNSTPTAATA. Composition is skewed to gly residues over residues 496–525 and 536–550; these read TAGGDGMRGRGGGGGGGGLRGNSSGRGMGY and GDGGTGVVQGQGAGG. The segment covering 563–578 has biased composition (basic and acidic residues); it reads GGDDGEGPGRRSDERF.

Belongs to the MMM1 family. Homodimer. Component of the ER-mitochondria encounter structure (ERMES) or MDM complex, composed of MMM1, MDM10, MDM12 and MDM34. An MMM1 homodimer associates with one molecule of MDM12 on each side in a pairwise head-to-tail manner, and the SMP-LTD domains of MMM1 and MDM12 generate a continuous hydrophobic tunnel for phospholipid trafficking.

Its subcellular location is the endoplasmic reticulum membrane. Component of the ERMES/MDM complex, which serves as a molecular tether to connect the endoplasmic reticulum (ER) and mitochondria. Components of this complex are involved in the control of mitochondrial shape and protein biogenesis, and function in nonvesicular lipid trafficking between the ER and mitochondria. The MDM12-MMM1 subcomplex functions in the major beta-barrel assembly pathway that is responsible for biogenesis of all outer membrane beta-barrel proteins, and acts in a late step after the SAM complex. The MDM10-MDM12-MMM1 subcomplex further acts in the TOM40-specific pathway after the action of the MDM12-MMM1 complex. Essential for establishing and maintaining the structure of mitochondria and maintenance of mtDNA nucleoids. This Ajellomyces capsulatus (strain G186AR / H82 / ATCC MYA-2454 / RMSCC 2432) (Darling's disease fungus) protein is Maintenance of mitochondrial morphology protein 1.